The primary structure comprises 162 residues: MTIVYLSLGTNMGDRAAYLQKALEALADLPQTRLLAQSSIYETTAWGKTSQADFLNMAYQLDTQLTAADFLKETQAIEQSLGRVRHEKWGSRTIDIDILLFGEEVYDTKELKVPHPYMTERAFVLIPLLELQPDLKLPPNHKLLRDYLAALDQSDITLFSAQ.

This sequence belongs to the HPPK family.

It carries out the reaction 6-hydroxymethyl-7,8-dihydropterin + ATP = (7,8-dihydropterin-6-yl)methyl diphosphate + AMP + H(+). Its pathway is cofactor biosynthesis; tetrahydrofolate biosynthesis; 2-amino-4-hydroxy-6-hydroxymethyl-7,8-dihydropteridine diphosphate from 7,8-dihydroneopterin triphosphate: step 4/4. Functionally, catalyzes the transfer of pyrophosphate from adenosine triphosphate (ATP) to 6-hydroxymethyl-7,8-dihydropterin, an enzymatic step in folate biosynthesis pathway. This Streptococcus pyogenes serotype M3 (strain ATCC BAA-595 / MGAS315) protein is 2-amino-4-hydroxy-6-hydroxymethyldihydropteridine pyrophosphokinase (folK).